The chain runs to 401 residues: MIIKPKIRGFICTTTHPVGCEANVKEQIAYTKAQGPIKNAPKRVLVVGSSSGYGLSSRIAAAFGGGAATIGVFFEKPGTDKKPGTAGFYNAAAFDKLAHEAGLYAKSLNGDAFSNEAKQKAIELIKQDLGQIDLVVYSLASPVRKMPDTGELVRSALKPIGETYTSTAVDTNKDVIIEASVEPATEQEIADTVTVMGGQDWELWIQALEEAGVLAEGCKTVAYSYIGTELTWPIYWDGALGRAKMDLDRAATALNEKLAAKGGTANVAVLKSVVTQASSAIPVMPLYIAMVFKKMREQGVHEGCMEQIYRMFSQRLYKEDGSAPEVDDHNRLRLDDWELRDDIQQHCRDLWPQITTENLRELTDYDMYKEEFIKLFGFGIEGIDYDADVNPEVEFDVIDIE.

Residues 48 to 53, 74 to 75, 111 to 112, and 139 to 140 each bind NAD(+); these read GSSSGY, FE, DA, and LA. Substrate is bound at residue Tyr-225. Tyr-235 serves as the catalytic Proton donor. NAD(+) is bound by residues Lys-244 and 273-275; that span reads VVT.

Belongs to the TER reductase family. In terms of assembly, monomer.

It catalyses the reaction a 2,3-saturated acyl-[ACP] + NAD(+) = a (2E)-enoyl-[ACP] + NADH + H(+). It carries out the reaction a 2,3-saturated acyl-CoA + NAD(+) = a (2E)-enoyl-CoA + NADH + H(+). The catalysed reaction is (2E)-butenoyl-[ACP] + NADH + H(+) = butanoyl-[ACP] + NAD(+). The enzyme catalyses butanoyl-CoA + NAD(+) = (2E)-butenoyl-CoA + NADH + H(+). It participates in lipid metabolism; fatty acid biosynthesis. Its activity is regulated as follows. Weakly inhibited by triclosan. Its function is as follows. Involved in the final reduction of the elongation cycle of fatty acid synthesis (FAS II). Catalyzes the NADH-dependent reduction of a carbon-carbon double bond in an enoyl moiety that is covalently linked to an acyl carrier protein (ACP). It can use both crotonyl-CoA and crotonyl-ACP. The sequence is that of Enoyl-[acyl-carrier-protein] reductase [NADH] 1 from Vibrio cholerae serotype O1 (strain ATCC 39315 / El Tor Inaba N16961).